Here is a 678-residue protein sequence, read N- to C-terminus: ATP-dependent RNA helicase DHX58 (678 aa).

Residues 11 to 188 form the Helicase ATP-binding domain; sequence IMPALEGKNI…DGAINHVLQL (178 aa). Residue 24 to 31 participates in ATP binding; sequence LPTGAGKT. The short motif at 131 to 134 is the DECH box element; the sequence is DECH. Residues 350–514 enclose the Helicase C-terminal domain; sequence KLEMLEKILQ…QAVAAVQKMD (165 aa). Residues 489-546 adopt a coiled-coil conformation; sequence ELKRELINEALETLMEQAVAAVQKMDQAEYQAKIRDLQQAALTKRAAQAAQRENQRQQ. In terms of domain architecture, RLR CTR spans 539-669; that stretch reads QRENQRQQFP…PDFDFLQHCA (131 aa). Zn(2+) is bound by residues Cys-556, Cys-559, Cys-612, and Cys-615. The interval 572–655 is RNA-binding; that stretch reads VEGTHHVNVN…RIQAKKWSRV (84 aa).

It belongs to the helicase family. RLR subfamily. Monomer in the absence of dsRNA. Homodimer in the presence of dsRNA. Interacts with RIGI (via CARD domain), MAVS/IPS1 and DDX60. Found in a complex with RIGI and IFIH1/MDA5. Interacts with ANKRD17. Directly interacts with ATG5 and ATG12, either as ATG5 and ATG12 monomers or as ATG12-ATG5 conjugates. As to quaternary structure, (Microbial infection) Interacts (via helicase C-terminal domain) with non-structural protein V of paramyxoviruses including human parainfluenza 2 virus, human parainfluenza 5 virus, measles virus, mumps virus, hendra virus and nipah virus. In terms of tissue distribution, expressed in testis, nerve and spleen. Also expressed in the brain.

Its subcellular location is the cytoplasm. The enzyme catalyses ATP + H2O = ADP + phosphate + H(+). Functionally, acts as a regulator of RIGI and IFIH1/MDA5 mediated antiviral signaling. Cannot initiate antiviral signaling as it lacks the CARD domain required for activating MAVS/IPS1-dependent signaling events. Can have both negative and positive regulatory functions related to RIGI and IFIH1/MDA5 signaling and this role in regulating signaling may be complex and could probably depend on characteristics of the infecting virus or target cells, or both. Its inhibitory action on RIG-I signaling may involve the following mechanisms: competition with RIGI for binding to the viral RNA, binding to RIGI and inhibiting its dimerization and interaction with MAVS/IPS1, competing with IKBKE in its binding to MAVS/IPS1 thereby inhibiting activation of interferon regulatory factor 3 (IRF3). Its positive regulatory role may involve unwinding or stripping nucleoproteins of viral RNA thereby facilitating their recognition by RIGI and IFIH1/MDA5. Involved in the innate immune response to various RNA viruses and some DNA viruses such as poxviruses and coronavirus SARS-CoV-2, and also to the bacterial pathogen Listeria monocytogenes. Can bind both ssRNA and dsRNA, with a higher affinity for dsRNA. Shows a preference to 5'-triphosphorylated RNA, although it can recognize RNA lacking a 5'-triphosphate. This Homo sapiens (Human) protein is ATP-dependent RNA helicase DHX58.